The chain runs to 148 residues: uncharacterized protein (148 aa).

Polar residues predominate over residues 1–17 (MEGLQRSTISFRRQGSS). The interval 1-148 (MEGLQRSTIS…SRRRIVTKKR (148 aa)) is disordered. Basic and acidic residues-rich tracts occupy residues 36–47 (EQKDESQRDEQP) and 58–67 (KPIDEKDKLR). A phosphoserine mark is found at serine 100 and serine 107. Over residues 128-148 (VNPRKRPPKRRSRRRIVTKKR) the composition is skewed to basic residues.

This is an uncharacterized protein from Arabidopsis thaliana (Mouse-ear cress).